We begin with the raw amino-acid sequence, 186 residues long: Elongation factor P (186 aa).

Belongs to the elongation factor P family.

It localises to the cytoplasm. It participates in protein biosynthesis; polypeptide chain elongation. Functionally, involved in peptide bond synthesis. Stimulates efficient translation and peptide-bond synthesis on native or reconstituted 70S ribosomes in vitro. Probably functions indirectly by altering the affinity of the ribosome for aminoacyl-tRNA, thus increasing their reactivity as acceptors for peptidyl transferase. The polypeptide is Elongation factor P (Cupriavidus metallidurans (strain ATCC 43123 / DSM 2839 / NBRC 102507 / CH34) (Ralstonia metallidurans)).